Here is a 381-residue protein sequence, read N- to C-terminus: MESNEDVERLLCQKYPGLAAELQPSGACIIRGVLGSEDTWRRLKLYLPHHPALHGFQLYVQESLEYKLYTSANLKLQDDWLLEDFLDHLPKILPAQKAPTVPKELCREGNIYYDILALYKSNEYCLQVDEACSMIRFSEFTDFEQHYLELKIPSLLLLDHSLPDCVSLGEMLTKSAGNLEEALNLFRKLLEDLRPFYDNFMDIDELCHVLQPSPISSKHKTRLFPLKDRVYLKLTIADPFACIASMSLKIIGPTEEVARLRHVLSDGLSNWDSEMNIHKNLLRMFDLCYFPMPDWSDGPKLDEEDNEELRCNICFAYRLDGGEVPLVSCDNAKCVLKCHAVCLEEWFKTLMDGKTFLEVSFGQCPFCKAKLSTSFAALLND.

Residues 110-293 are UBC-RWD region (URD); that stretch reads NIYYDILALY…MFDLCYFPMP (184 aa). An RING-CH-type; degenerate zinc finger spans residues 303–374; that stretch reads EEDNEELRCN…PFCKAKLSTS (72 aa). Zn(2+)-binding residues include Cys311, Cys314, Cys329, Cys334, His339, Cys342, Cys364, and Cys367.

Interacts (via C-terminus) with FANCI and Fancd2.

The protein resides in the nucleus. The enzyme catalyses S-ubiquitinyl-[E2 ubiquitin-conjugating enzyme]-L-cysteine + [acceptor protein]-L-lysine = [E2 ubiquitin-conjugating enzyme]-L-cysteine + N(6)-ubiquitinyl-[acceptor protein]-L-lysine.. The protein operates within protein modification; protein ubiquitination. Functionally, ubiquitin ligase protein that mediates monoubiquitination of Fancd2. Ubiquitination of Fancd2 is stimulated by ionising radiation. Together with Fancd2, and probably FANCI, involved in DNA repair of damage caused by agents that induce interstrand cross-links but not agents that cause double strand breaks. The sequence is that of E3 ubiquitin-protein ligase Fancl from Drosophila melanogaster (Fruit fly).